We begin with the raw amino-acid sequence, 226 residues long: Enolase-phosphatase E1 (226 aa).

This sequence belongs to the HAD-like hydrolase superfamily. MasA/MtnC family. Monomer. Mg(2+) serves as cofactor.

It catalyses the reaction 5-methylsulfanyl-2,3-dioxopentyl phosphate + H2O = 1,2-dihydroxy-5-(methylsulfanyl)pent-1-en-3-one + phosphate. It participates in amino-acid biosynthesis; L-methionine biosynthesis via salvage pathway; L-methionine from S-methyl-5-thio-alpha-D-ribose 1-phosphate: step 3/6. The protein operates within amino-acid biosynthesis; L-methionine biosynthesis via salvage pathway; L-methionine from S-methyl-5-thio-alpha-D-ribose 1-phosphate: step 4/6. In terms of biological role, bifunctional enzyme that catalyzes the enolization of 2,3-diketo-5-methylthiopentyl-1-phosphate (DK-MTP-1-P) into the intermediate 2-hydroxy-3-keto-5-methylthiopentenyl-1-phosphate (HK-MTPenyl-1-P), which is then dephosphorylated to form the acireductone 1,2-dihydroxy-3-keto-5-methylthiopentene (DHK-MTPene). The sequence is that of Enolase-phosphatase E1 from Shewanella putrefaciens (strain CN-32 / ATCC BAA-453).